Consider the following 201-residue polypeptide: IMP cyclohydrolase (201 aa).

It belongs to the archaeal IMP cyclohydrolase family.

The catalysed reaction is IMP + H2O = 5-formamido-1-(5-phospho-D-ribosyl)imidazole-4-carboxamide. It functions in the pathway purine metabolism; IMP biosynthesis via de novo pathway; IMP from 5-formamido-1-(5-phospho-D-ribosyl)imidazole-4-carboxamide: step 1/1. Functionally, catalyzes the cyclization of 5-formylamidoimidazole-4-carboxamide ribonucleotide to IMP. The sequence is that of IMP cyclohydrolase from Methanococcus maripaludis (strain C5 / ATCC BAA-1333).